The chain runs to 272 residues: ATP-dependent Clp protease proteolytic subunit, mitochondrial (272 aa).

Residues 1–52 (MWPRVLLGEARVAVDGCRALLSRLAVHFSPPWTAVSCSPLRRSLHGTATRAF) constitute a mitochondrion transit peptide. Ser-149 functions as the Nucleophile in the catalytic mechanism. Residue His-174 is part of the active site. An N6-succinyllysine modification is found at Lys-196. Lys-207 is subject to N6-acetyllysine. Residues 240-272 (VLVHPPQDGEDEPELVQKETATAPTDPPAPTST) form a disordered region.

It belongs to the peptidase S14 family. As to quaternary structure, fourteen CLPP subunits assemble into 2 heptameric rings which stack back to back to give a disk-like structure with a central cavity. Component of the ClpXP complex formed by the assembly of two CLPP heptameric rings with two CLPX hexameric rings, giving rise to a symmetrical structure with two central CLPP rings flanked by a CLPX ring at either end of the complex. In terms of tissue distribution, detected in liver (at protein level). High levels found in heart, liver and skeletal muscle.

It localises to the mitochondrion matrix. It catalyses the reaction Hydrolysis of proteins to small peptides in the presence of ATP and magnesium. alpha-casein is the usual test substrate. In the absence of ATP, only oligopeptides shorter than five residues are hydrolyzed (such as succinyl-Leu-Tyr-|-NHMec, and Leu-Tyr-Leu-|-Tyr-Trp, in which cleavage of the -Tyr-|-Leu- and -Tyr-|-Trp bonds also occurs).. Protease component of the ClpXP complex that cleaves peptides and various proteins in an ATP-dependent process. Has low peptidase activity in the absence of CLPX. The ClpXP complex can degrade CSN1S1, CSN2 and CSN3, as well as synthetic peptides (in vitro) and may be responsible for a fairly general and central housekeeping function rather than for the degradation of specific substrates. Cleaves PINK1 in the mitochondrion. This chain is ATP-dependent Clp protease proteolytic subunit, mitochondrial, found in Mus musculus (Mouse).